The chain runs to 205 residues: Large ribosomal subunit protein uL18 (205 aa).

The protein belongs to the universal ribosomal protein uL18 family. In terms of assembly, part of the 50S ribosomal subunit. Contacts the 5S and 23S rRNAs.

In terms of biological role, this is one of the proteins that bind and probably mediate the attachment of the 5S RNA into the large ribosomal subunit, where it forms part of the central protuberance. This chain is Large ribosomal subunit protein uL18, found in Pyrobaculum arsenaticum (strain DSM 13514 / JCM 11321 / PZ6).